An 83-amino-acid chain; its full sequence is MENDAGENVDLYVPRKCSASNRIIHAKDHASVQLSIVDVDPETGRQTDGSKTYAICGEIRRMGESDDCIVRLAKKDGLITKNF.

Belongs to the eukaryotic ribosomal protein eS21 family. As to quaternary structure, component of the 40S small ribosomal subunit. Interacts with sta.

The protein resides in the cytoplasm. Its subcellular location is the cytosol. It localises to the rough endoplasmic reticulum. Its function is as follows. May be an associated component of the ribosome rather than a core structural subunit. May act as a translation initiation factor. Has a role in regulation of cell proliferation in the hematopoietic organs and the imaginal disks of larva. The sequence is that of Small ribosomal subunit protein eS21 (RpS21) from Drosophila ananassae (Fruit fly).